The sequence spans 188 residues: Elongation factor P (188 aa).

Position 34 is an N6-(3,6-diaminohexanoyl)-5-hydroxylysine (Lys-34).

This sequence belongs to the elongation factor P family. May be beta-lysylated on the epsilon-amino group of Lys-34 by the combined action of EpmA and EpmB, and then hydroxylated on the C5 position of the same residue by EpmC (if this protein is present). Lysylation is critical for the stimulatory effect of EF-P on peptide-bond formation. The lysylation moiety may extend toward the peptidyltransferase center and stabilize the terminal 3-CCA end of the tRNA. Hydroxylation of the C5 position on Lys-34 may allow additional potential stabilizing hydrogen-bond interactions with the P-tRNA.

It is found in the cytoplasm. The protein operates within protein biosynthesis; polypeptide chain elongation. Involved in peptide bond synthesis. Alleviates ribosome stalling that occurs when 3 or more consecutive Pro residues or the sequence PPG is present in a protein, possibly by augmenting the peptidyl transferase activity of the ribosome. Modification of Lys-34 is required for alleviation. This is Elongation factor P from Actinobacillus succinogenes (strain ATCC 55618 / DSM 22257 / CCUG 43843 / 130Z).